We begin with the raw amino-acid sequence, 224 residues long: uncharacterized protein (224 aa).

Asp52 is a catalytic residue.

The protein belongs to the pseudouridine synthase RluA family.

It catalyses the reaction a uridine in RNA = a pseudouridine in RNA. This is an uncharacterized protein from Haemophilus influenzae (strain ATCC 51907 / DSM 11121 / KW20 / Rd).